A 668-amino-acid chain; its full sequence is Fructose-1,6-bisphosphatase class 3 (668 aa).

This sequence belongs to the FBPase class 3 family. It depends on Mn(2+) as a cofactor.

It carries out the reaction beta-D-fructose 1,6-bisphosphate + H2O = beta-D-fructose 6-phosphate + phosphate. The protein operates within carbohydrate biosynthesis; gluconeogenesis. The protein is Fructose-1,6-bisphosphatase class 3 of Clostridium botulinum (strain Okra / Type B1).